Reading from the N-terminus, the 148-residue chain is Deoxyuridine 5'-triphosphate nucleotidohydrolase (148 aa).

Substrate is bound by residues 68-70 (RSG), N81, 85-87 (TID), and K95.

The protein belongs to the dUTPase family. Mg(2+) serves as cofactor.

It carries out the reaction dUTP + H2O = dUMP + diphosphate + H(+). The protein operates within pyrimidine metabolism; dUMP biosynthesis; dUMP from dCTP (dUTP route): step 2/2. Its function is as follows. This enzyme is involved in nucleotide metabolism: it produces dUMP, the immediate precursor of thymidine nucleotides and it decreases the intracellular concentration of dUTP so that uracil cannot be incorporated into DNA. The chain is Deoxyuridine 5'-triphosphate nucleotidohydrolase from Rickettsia canadensis (strain McKiel).